The primary structure comprises 331 residues: Ribose-phosphate pyrophosphokinase (331 aa).

55–57 contributes to the ATP binding site; the sequence is DGE. Mg(2+) is bound by residues His-148 and Asp-187. Residue Lys-211 is part of the active site. D-ribose 5-phosphate contacts are provided by residues Arg-213, Asp-237, and 241 to 245; that span reads DTGGT.

Belongs to the ribose-phosphate pyrophosphokinase family. Class I subfamily. Homohexamer. Mg(2+) is required as a cofactor.

The protein resides in the cytoplasm. The enzyme catalyses D-ribose 5-phosphate + ATP = 5-phospho-alpha-D-ribose 1-diphosphate + AMP + H(+). It participates in metabolic intermediate biosynthesis; 5-phospho-alpha-D-ribose 1-diphosphate biosynthesis; 5-phospho-alpha-D-ribose 1-diphosphate from D-ribose 5-phosphate (route I): step 1/1. In terms of biological role, involved in the biosynthesis of the central metabolite phospho-alpha-D-ribosyl-1-pyrophosphate (PRPP) via the transfer of pyrophosphoryl group from ATP to 1-hydroxyl of ribose-5-phosphate (Rib-5-P). In Prochlorococcus marinus subsp. pastoris (strain CCMP1986 / NIES-2087 / MED4), this protein is Ribose-phosphate pyrophosphokinase.